The sequence spans 561 residues: Dihydroxy-acid dehydratase (561 aa).

Cysteine 50 contacts [2Fe-2S] cluster. Residue aspartate 82 coordinates Mg(2+). A [2Fe-2S] cluster-binding site is contributed by cysteine 123. Positions 124 and 125 each coordinate Mg(2+). Lysine 125 carries the N6-carboxylysine modification. Cysteine 195 contacts [2Fe-2S] cluster. Glutamate 447 contacts Mg(2+). Catalysis depends on serine 473, which acts as the Proton acceptor.

The protein belongs to the IlvD/Edd family. In terms of assembly, homodimer. Requires [2Fe-2S] cluster as cofactor. The cofactor is Mg(2+).

The enzyme catalyses (2R)-2,3-dihydroxy-3-methylbutanoate = 3-methyl-2-oxobutanoate + H2O. It catalyses the reaction (2R,3R)-2,3-dihydroxy-3-methylpentanoate = (S)-3-methyl-2-oxopentanoate + H2O. The protein operates within amino-acid biosynthesis; L-isoleucine biosynthesis; L-isoleucine from 2-oxobutanoate: step 3/4. It participates in amino-acid biosynthesis; L-valine biosynthesis; L-valine from pyruvate: step 3/4. In terms of biological role, functions in the biosynthesis of branched-chain amino acids. Catalyzes the dehydration of (2R,3R)-2,3-dihydroxy-3-methylpentanoate (2,3-dihydroxy-3-methylvalerate) into 2-oxo-3-methylpentanoate (2-oxo-3-methylvalerate) and of (2R)-2,3-dihydroxy-3-methylbutanoate (2,3-dihydroxyisovalerate) into 2-oxo-3-methylbutanoate (2-oxoisovalerate), the penultimate precursor to L-isoleucine and L-valine, respectively. The protein is Dihydroxy-acid dehydratase of Acaryochloris marina (strain MBIC 11017).